Reading from the N-terminus, the 476-residue chain is tRNA (cytosine(72)-C(5))-methyltransferase NSUN6 (476 aa).

Residues Q111–Y203 enclose the PUA domain. S-adenosyl-L-methionine is bound by residues C242–K248, D266, D293, and D323. The active-site Nucleophile is C373. K419 is subject to N6-acetyllysine.

Belongs to the class I-like SAM-binding methyltransferase superfamily. RsmB/NOP family.

It localises to the cytoplasm. It carries out the reaction cytidine(72) in tRNA(Thr) + S-adenosyl-L-methionine = 5-methylcytidine(72) in tRNA(Thr) + S-adenosyl-L-homocysteine + H(+). It catalyses the reaction cytidine(72) in tRNA(Cys) + S-adenosyl-L-methionine = 5-methylcytidine(72) in tRNA(Cys) + S-adenosyl-L-homocysteine + H(+). Its function is as follows. S-adenosyl-L-methionine-dependent methyltransferase that specifically methylates the C5 position of cytosine 72 in tRNA(Thr)(TGT) and tRNA(Cys)(GCA). In vitro also methylates tRNA(Thr)(AGT). Methylation requires, in the acceptor stem region, the presence of the 3'-CCA terminus, the target site C72, the discriminator base U73, and the second and third base pairs (2:71 and 3:70) in the tRNA substrates. The sequence is that of tRNA (cytosine(72)-C(5))-methyltransferase NSUN6 from Mus musculus (Mouse).